We begin with the raw amino-acid sequence, 266 residues long: Glutamate racemase (266 aa).

Substrate-binding positions include 9–10 (DS) and 41–42 (YG). Residue Cys-73 is the Proton donor/acceptor of the active site. 74–75 (NS) serves as a coordination point for substrate. Cys-183 acts as the Proton donor/acceptor in catalysis. 184-185 (TH) contributes to the substrate binding site.

The protein belongs to the aspartate/glutamate racemases family.

The enzyme catalyses L-glutamate = D-glutamate. It participates in cell wall biogenesis; peptidoglycan biosynthesis. Functionally, provides the (R)-glutamate required for cell wall biosynthesis. This chain is Glutamate racemase, found in Shewanella halifaxensis (strain HAW-EB4).